The following is a 114-amino-acid chain: FK506-binding protein 1 (114 aa).

The 89-residue stretch at 26–114 (GDLVTIHYTG…IFEVELLKVN (89 aa)) folds into the PPIase FKBP-type domain.

Belongs to the FKBP-type PPIase family. FKBP1 subfamily.

Its subcellular location is the cytoplasm. It catalyses the reaction [protein]-peptidylproline (omega=180) = [protein]-peptidylproline (omega=0). Inhibited by both FK506 and rapamycin. PPIases accelerate the folding of proteins. It catalyzes the cis-trans isomerization of proline imidic peptide bonds in oligopeptides. The polypeptide is FK506-binding protein 1 (FPR1) (Eremothecium gossypii (strain ATCC 10895 / CBS 109.51 / FGSC 9923 / NRRL Y-1056) (Yeast)).